A 120-amino-acid polypeptide reads, in one-letter code: Late histone H2A.2.2 (120 aa).

A compositionally biased stretch (basic residues) spans 1–18 (MSGRGKGAKSKSKAKSRS). Positions 1 to 22 (MSGRGKGAKSKSKAKSRSSRAG) are disordered. Ser-2 is modified (N-acetylserine). Residue Ser-2 is modified to Phosphoserine. Gln-104 is modified (N5-methylglutamine). Lys-119 participates in a covalent cross-link: Glycyl lysine isopeptide (Lys-Gly) (interchain with G-Cter in ubiquitin).

This sequence belongs to the histone H2A family. The nucleosome is a histone octamer containing two molecules each of H2A, H2B, H3 and H4 assembled in one H3-H4 heterotetramer and two H2A-H2B heterodimers. The octamer wraps approximately 147 bp of DNA. In terms of processing, monoubiquitination of Lys-119 gives a specific tag for epigenetic transcriptional repression. Phosphorylation of Ser-2 directly represses transcription.

The protein localises to the nucleus. The protein resides in the chromosome. Its function is as follows. Core component of nucleosome. Nucleosomes wrap and compact DNA into chromatin, limiting DNA accessibility to the cellular machineries which require DNA as a template. Histones thereby play a central role in transcription regulation, DNA repair, DNA replication and chromosomal stability. DNA accessibility is regulated via a complex set of post-translational modifications of histones, also called histone code, and nucleosome remodeling. This Psammechinus miliaris (Green sea urchin) protein is Late histone H2A.2.2.